We begin with the raw amino-acid sequence, 64 residues long: Conotoxin Im11.1 (64 aa).

An N-terminal signal peptide occupies residues M1–A26. Disulfide bonds link C27/C41, C34/C46, C40/C50, and C45/C54. Asparagine amide is present on N57. The propeptide occupies A61–Q64.

It belongs to the conotoxin I2 superfamily. Expressed by the venom duct.

Its subcellular location is the secreted. The polypeptide is Conotoxin Im11.1 (Conus imperialis (Imperial cone)).